A 299-amino-acid polypeptide reads, in one-letter code: Ribosomal RNA small subunit methyltransferase H 1 (299 aa).

Residues 31–33, D50, F76, D97, and Q104 contribute to the S-adenosyl-L-methionine site; that span reads GGH.

The protein belongs to the methyltransferase superfamily. RsmH family.

The protein localises to the cytoplasm. It catalyses the reaction cytidine(1402) in 16S rRNA + S-adenosyl-L-methionine = N(4)-methylcytidine(1402) in 16S rRNA + S-adenosyl-L-homocysteine + H(+). Specifically methylates the N4 position of cytidine in position 1402 (C1402) of 16S rRNA. The sequence is that of Ribosomal RNA small subunit methyltransferase H 1 from Acholeplasma laidlawii (strain PG-8A).